A 468-amino-acid polypeptide reads, in one-letter code: Ribulose bisphosphate carboxylase large chain (468 aa).

The residue at position 5 (lysine 5) is an N6,N6,N6-trimethyllysine. Substrate contacts are provided by asparagine 114 and threonine 164. Lysine 166 serves as the catalytic Proton acceptor. Lysine 168 serves as a coordination point for substrate. Residues lysine 192, aspartate 194, and glutamate 195 each coordinate Mg(2+). Residue lysine 192 is modified to N6-carboxylysine. The active-site Proton acceptor is the histidine 285. Substrate contacts are provided by arginine 286, histidine 318, and serine 370.

This sequence belongs to the RuBisCO large chain family. Type I subfamily. In terms of assembly, heterohexadecamer of 8 large chains and 8 small chains; disulfide-linked. The disulfide link is formed within the large subunit homodimers. Requires Mg(2+) as cofactor. In terms of processing, the disulfide bond which can form in the large chain dimeric partners within the hexadecamer appears to be associated with oxidative stress and protein turnover.

The protein localises to the plastid. The protein resides in the chloroplast. It carries out the reaction 2 (2R)-3-phosphoglycerate + 2 H(+) = D-ribulose 1,5-bisphosphate + CO2 + H2O. The catalysed reaction is D-ribulose 1,5-bisphosphate + O2 = 2-phosphoglycolate + (2R)-3-phosphoglycerate + 2 H(+). Functionally, ruBisCO catalyzes two reactions: the carboxylation of D-ribulose 1,5-bisphosphate, the primary event in carbon dioxide fixation, as well as the oxidative fragmentation of the pentose substrate in the photorespiration process. Both reactions occur simultaneously and in competition at the same active site. The chain is Ribulose bisphosphate carboxylase large chain from Anthospermum herbaceum.